Here is a 252-residue protein sequence, read N- to C-terminus: Imidazole glycerol phosphate synthase subunit HisF (252 aa).

Active-site residues include aspartate 11 and aspartate 130.

The protein belongs to the HisA/HisF family. Heterodimer of HisH and HisF.

Its subcellular location is the cytoplasm. The enzyme catalyses 5-[(5-phospho-1-deoxy-D-ribulos-1-ylimino)methylamino]-1-(5-phospho-beta-D-ribosyl)imidazole-4-carboxamide + L-glutamine = D-erythro-1-(imidazol-4-yl)glycerol 3-phosphate + 5-amino-1-(5-phospho-beta-D-ribosyl)imidazole-4-carboxamide + L-glutamate + H(+). Its pathway is amino-acid biosynthesis; L-histidine biosynthesis; L-histidine from 5-phospho-alpha-D-ribose 1-diphosphate: step 5/9. In terms of biological role, IGPS catalyzes the conversion of PRFAR and glutamine to IGP, AICAR and glutamate. The HisF subunit catalyzes the cyclization activity that produces IGP and AICAR from PRFAR using the ammonia provided by the HisH subunit. The protein is Imidazole glycerol phosphate synthase subunit HisF of Bacillus pumilus (strain SAFR-032).